Here is a 190-residue protein sequence, read N- to C-terminus: Elongation factor P-like protein (190 aa).

Belongs to the elongation factor P family.

The protein is Elongation factor P-like protein of Proteus mirabilis (strain HI4320).